The primary structure comprises 412 residues: FAD-dependent monooxygenase nscC (412 aa).

Positions 1-21 (MGKQQETILIIGAGISGLATS) are cleaved as a signal peptide. 2 residues coordinate FAD: Glu-35 and Ala-46. Asn-92 carries N-linked (GlcNAc...) asparagine glycosylation. Arg-119 contacts FAD. Residues Asn-170 and Asn-231 are each glycosylated (N-linked (GlcNAc...) asparagine). Asp-326 and Gly-339 together coordinate FAD.

Belongs to the paxM FAD-dependent monooxygenase family. It depends on FAD as a cofactor.

It participates in secondary metabolite biosynthesis. FAD-dependent monooxygenase; part of the gene cluster that mediates the biosynthesis of neosartoricin B, a prenylated anthracenone that probably exhibits T-cell antiproliferative activity, suggestive of a physiological role as an immunosuppressive agent. The non-reducing polyketide synthase nscA probably synthesizes and cyclizes the decaketide backbone. The hydrolase nscB then mediates the product release through hydrolysis followed by spontaneous decarboxylation. The prenyltransferase nscD catalyzes the addition of the dimethylallyl group to the aromatic C5. The FAD-dependent monooxygenase nscC is then responsible for the stereospecific hydroxylation at C2. Neosartoricin B can be converted into two additional compounds neosartoricins C and D. Neosartoricin C is a spirocyclic compound that is cyclized through the attack of C3 hydroxyl on C14, followed by dehydration. On the other hand, neosartoricin D is a further cyclized compound in which attack of C2 on C14 in neosartoricin C results in the formation of the acetal-containing dioxabicyclo-octanone ring. Both of these compounds are novel and possibly represent related metabolites of the gene cluster. This is FAD-dependent monooxygenase nscC from Trichophyton tonsurans (strain CBS 112818) (Scalp ringworm fungus).